We begin with the raw amino-acid sequence, 412 residues long: Palmitoyltransferase ZDHHC6 (412 aa).

Topologically, residues 1-24 (MNILSAIIVFENLHEVKRLFHWGP) are cytoplasmic. Residues 25 to 45 (IIALTVIGVCSSMAILDSIIW) form a helical membrane-spanning segment. Over 46–57 (YWPLDTTGGSIN) the chain is Lumenal. The chain crosses the membrane as a helical span at residues 58 to 78 (FIMLINWTVLILYNYFNAMFV). At 79 to 143 (GPGYIPLEWK…NCCGHLNHAY (65 aa)) the chain is on the cytoplasmic side. Residues 99-149 (QFCRLCQGYKAPRSHHCRKCNRCVMKMDHHCPWINNCCGHLNHAYFTSFLL) form the DHHC domain. C129 (S-palmitoyl cysteine intermediate) is an active-site residue. Residues 144-164 (FTSFLLLAPLGCIHAALIFIM) form a helical membrane-spanning segment. At 165–205 (TMYTQLYDRISFGWSSVKIDMSAARHIHHPIMPFSIAAFAA) the chain is on the lumenal side. Residues 206–226 (TLFALGLALGTTIAVGMLFFI) form a helical membrane-spanning segment. Over 227–412 (QMKVILRNRT…NSTSEEKKEQ (186 aa)) the chain is Cytoplasmic. The SH3 domain maps to 313-398 (QRSVEYRVVE…PRRCVEKCLY (86 aa)). S-palmitoyl cysteine attachment occurs at residues C328, C329, and C343. Residues 409-412 (KKEQ) carry the Di-lysine motif motif.

Belongs to the DHHC palmitoyltransferase family.

Its subcellular location is the endoplasmic reticulum membrane. The enzyme catalyses L-cysteinyl-[protein] + hexadecanoyl-CoA = S-hexadecanoyl-L-cysteinyl-[protein] + CoA. It carries out the reaction L-cysteinyl-[protein] + octadecanoyl-CoA = S-octadecanoyl-L-cysteinyl-[protein] + CoA. Endoplasmic reticulum palmitoyl acyltransferase that probably catalyzes the addition of palmitate onto various protein substrates and is involved in a variety of cellular processes. Could also function as a stearoyltransferase. This Danio rerio (Zebrafish) protein is Palmitoyltransferase ZDHHC6.